We begin with the raw amino-acid sequence, 357 residues long: Gas vesicle ATPase GvpN (357 aa).

Residues 22–36 are compositionally biased toward polar residues; it reads ATSASKNGGRTTPSA. The segment at 22-43 is disordered; it reads ATSASKNGGRTTPSALTPRPRS. 72 to 79 contributes to the ATP binding site; the sequence is GPAGTGKT.

This sequence belongs to the CbbQ/NirQ/NorQ/GpvN family. In terms of assembly, forms homodimers, probably interacts with other GV proteins including GvpA.

It localises to the gas vesicle. It is found in the cytoplasm. It catalyses the reaction ATP + H2O = ADP + phosphate + H(+). Its function is as follows. An ATPase that functions in gas vesicle formation. A minor component of the gas vesicle, also found in soluble extracts. Gas vesicles (GV) are hollow, gas filled proteinaceous nanostructures. During planktonic growth they allow positioning of the organism at a favorable depth for light or nutrient acquisition. In Ancylobacter aquaticus, this protein is Gas vesicle ATPase GvpN.